Consider the following 1217-residue polypeptide: MFLYNITLQRATGISHAIHGNFSGTKQQEIVVSRGKILELLRPDANTGKVHTLLTMEVFGVVRSLMAFRLTGGTKDYVVVGSDSGRIVILEYHPSKNMFEKIHQETFGKSGCRRIVPGQFLAVDPKGRAVMIGATEKQKLVYILNRDAAARLTISSPLEAHKANTLVYHVVGVDVGFENPMFACLEMDYEEADNDPTGEAAANTQQTLTFYELDLGLNHVVRKYSEALEEHGNFLITVPGGSDGPSGVLICSENYITYKNFGDQPDIRCPIPRRRNDLDDPERGMIFVCSATHKTKSMFFFLAQTEQGDIFKVTLETDEEMVTEIRMKYFDTIPVATAMCVLKTGFLFVSSEFGNHYLYQIAHLGDDDEEPEFSSAMPLEEGDTFFFQPRPLKNLVLVDEQESLSPIMSCQIADLANEDTPQLYVACGRGPRSTLRVLRHGLEVSEMAVSELPGNPNAVWTVRRHVEDEFDAYIIVSFVNATLVLSIGETVEEVTDSGFLGTTPTLSCSLLGEDALVQVYPDGIRHIRADKRVNEWKTPGKKTIIRCAVNQRQVVIALTGGELVYFEMDPSGQLNEYTERKEMSADVVCMSLANVPPGEQRSRFLAVGLVDNTVRIISLDPSDCLQPLSMQALPAQPESLCIVEMGGVEKQDELGEKGTIGFLYLNIGLQNGVLLRTVLDPVTGDLSDTRTRYLGSRPVKLFRVRMQGQEAVLAMSSRSWLSYSYQSRFHLTPLSYETLEYASGFASEQCPEGIVAISTNTLRILALEKLGAVFNQVAFPLQYTPRKFVIHPETNNLILIETDHNAYTEATKAQRKQQMAEEMVEAAGEDERELAAEMAAAFLNENLPEAIFGAPKAGSGQWASLVRLINPIQGNTLDLVQLEQNEAAFSVAICRFLNGGDDWYVLVGVARDMILNPRSVGGGYIYTYRIVGGGDKLEFLHKTPVEDVPLAIAPFQGRVLVGVGKLLRIYDLGKKKLLRKCENKHVPNLVTGIHTIGQRVIVSDVQESLFWVRYRRNENQLIIFADDTYPRWITTACLLDYDTMASADKFGNICVVRLPPNTSDDVDEDPTGNKALWDRGLLNGASQKAEIIINYHIGETVLSLQKTTLIPGGSESLVYTTLSGGIGILVPFTSHEDHDFFQHLEMHMRSEFPPLCGRDHLSFRSYYFPVKNVIDGDLCEQFNSMDPHKQKSVSEELDRTPPEVSKKLEDIRTRYAF.

The protein belongs to the RSE1 family. In terms of assembly, component of the 17S U2 SnRNP complex, a ribonucleoprotein complex that contains small nuclear RNA (snRNA) U2 and a number of specific proteins. Part of the SF3B subcomplex of the 17S U2 SnRNP complex. SF3B associates with the splicing subcomplex SF3A and a 12S RNA unit to form the U2 small nuclear ribonucleoproteins complex (U2 snRNP). Component of the minor (U12-type spliceosome) spliceosome.

It is found in the nucleus. Its function is as follows. Component of the 17S U2 SnRNP complex of the spliceosome, a large ribonucleoprotein complex that removes introns from transcribed pre-mRNAs. The 17S U2 SnRNP complex (1) directly participates in early spliceosome assembly and (2) mediates recognition of the intron branch site during pre-mRNA splicing by promoting the selection of the pre-mRNA branch-site adenosine, the nucleophile for the first step of splicing. Within the 17S U2 SnRNP complex, SF3B3 is part of the SF3B subcomplex, which is required for 'A' complex assembly formed by the stable binding of U2 snRNP to the branchpoint sequence in pre-mRNA. Also acts as a component of the minor spliceosome, which is involved in the splicing of U12-type introns in pre-mRNAs. The chain is Splicing factor 3B subunit 3 (sf3b3) from Danio rerio (Zebrafish).